The chain runs to 564 residues: Urocanate hydratase (564 aa).

Residues 54–55 (GG), Q132, 178–180 (GMG), E198, R203, 244–245 (NA), 269–273 (QTSAH), 279–280 (YL), and Y328 contribute to the NAD(+) site. C416 is an active-site residue. Residue G498 coordinates NAD(+).

Belongs to the urocanase family. As to quaternary structure, homodimer. The cofactor is NAD(+).

It carries out the reaction 4-imidazolone-5-propanoate = trans-urocanate + H2O. It participates in amino-acid degradation; L-histidine degradation into L-glutamate; N-formimidoyl-L-glutamate from L-histidine: step 2/3. This Trifolium repens (Creeping white clover) protein is Urocanate hydratase.